We begin with the raw amino-acid sequence, 513 residues long: Cytochrome P450 71D445 (513 aa).

The helical; Signal-anchor for type II membrane protein transmembrane segment at 12 to 28 (SEWAITSTITLLFLILL) threads the bilayer. Heme is bound at residue cysteine 450.

The protein belongs to the cytochrome P450 family. It depends on heme as a cofactor. As to expression, expressed in mature seeds.

The protein localises to the membrane. The enzyme catalyses (-)-casbene + reduced [NADPH--hemoprotein reductase] + O2 = 8-hydroxycasbene + oxidized [NADPH--hemoprotein reductase] + H2O + H(+). The catalysed reaction is 4-hydroxycasbene + reduced [NADPH--hemoprotein reductase] + O2 = 4,8-dihydroxycasbene + oxidized [NADPH--hemoprotein reductase] + H2O + H(+). It carries out the reaction 4,8-dihydroxycasbene + reduced [NADPH--hemoprotein reductase] + O2 = 4,5,8-trihydroxycasbene + oxidized [NADPH--hemoprotein reductase] + H2O + H(+). It participates in secondary metabolite biosynthesis; terpenoid biosynthesis. In terms of biological role, involved in the biosynthesis of macrocyclic lathyrane type diterpenoids (also called Euphorbia factors) natural products, including the cyclization route from casbene to jolkinol C, a precursor for ingenol mebutate that is used to treat actinic keratosis, a precancerous skin condition. Catalyzes the hydroxylation of (-)-casbene and 4-hydroxycasbene to produce 8-hydroxycasbene and 4,8-dihydroxycasbene, respectively. Also mediates the formation of 4-hydroxy-8-ketocasbene from 4,8-dihydroxycasbene. Together with ADH1, triggers the biosynthesis of 8-ketocasbene from 8-hydroxycasbene. The protein is Cytochrome P450 71D445 of Euphorbia lathyris (Caper spurge).